A 151-amino-acid polypeptide reads, in one-letter code: MLKEFKEFALKGNVVDMAVGIIIGGAFTGIVKSLVGDVLTPPLGLLLNGVDFTNLFVVLKEGATPGPYLALEQAQSAGAVTLNYGLFINAFISFVIMAVAVFFLVRGINRLRKMTEKPPEPAAAPDTKECPFCFSAIPVKAVRCPNCTSQL.

2 helical membrane-spanning segments follow: residues 19 to 39 (VGIIIGGAFTGIVKSLVGDVL) and 85 to 105 (GLFINAFISFVIMAVAVFFLV).

This sequence belongs to the MscL family. In terms of assembly, homopentamer.

The protein localises to the cell inner membrane. Its function is as follows. Channel that opens in response to stretch forces in the membrane lipid bilayer. May participate in the regulation of osmotic pressure changes within the cell. The protein is Large-conductance mechanosensitive channel of Chlorobaculum parvum (strain DSM 263 / NCIMB 8327) (Chlorobium vibrioforme subsp. thiosulfatophilum).